The primary structure comprises 220 residues: Thiamine-phosphate synthase (220 aa).

4-amino-2-methyl-5-(diphosphooxymethyl)pyrimidine contacts are provided by residues 46–50 (QFREK) and asparagine 83. Residues aspartate 84 and aspartate 103 each coordinate Mg(2+). Serine 122 serves as a coordination point for 4-amino-2-methyl-5-(diphosphooxymethyl)pyrimidine. A 2-[(2R,5Z)-2-carboxy-4-methylthiazol-5(2H)-ylidene]ethyl phosphate-binding site is contributed by 149–151 (TNS). Residue lysine 152 coordinates 4-amino-2-methyl-5-(diphosphooxymethyl)pyrimidine. 2-[(2R,5Z)-2-carboxy-4-methylthiazol-5(2H)-ylidene]ethyl phosphate contacts are provided by residues glycine 181 and 201–202 (IS).

It belongs to the thiamine-phosphate synthase family. Requires Mg(2+) as cofactor.

It carries out the reaction 2-[(2R,5Z)-2-carboxy-4-methylthiazol-5(2H)-ylidene]ethyl phosphate + 4-amino-2-methyl-5-(diphosphooxymethyl)pyrimidine + 2 H(+) = thiamine phosphate + CO2 + diphosphate. The enzyme catalyses 2-(2-carboxy-4-methylthiazol-5-yl)ethyl phosphate + 4-amino-2-methyl-5-(diphosphooxymethyl)pyrimidine + 2 H(+) = thiamine phosphate + CO2 + diphosphate. The catalysed reaction is 4-methyl-5-(2-phosphooxyethyl)-thiazole + 4-amino-2-methyl-5-(diphosphooxymethyl)pyrimidine + H(+) = thiamine phosphate + diphosphate. Its pathway is cofactor biosynthesis; thiamine diphosphate biosynthesis; thiamine phosphate from 4-amino-2-methyl-5-diphosphomethylpyrimidine and 4-methyl-5-(2-phosphoethyl)-thiazole: step 1/1. In terms of biological role, condenses 4-methyl-5-(beta-hydroxyethyl)thiazole monophosphate (THZ-P) and 2-methyl-4-amino-5-hydroxymethyl pyrimidine pyrophosphate (HMP-PP) to form thiamine monophosphate (TMP). This Mannheimia succiniciproducens (strain KCTC 0769BP / MBEL55E) protein is Thiamine-phosphate synthase.